The sequence spans 811 residues: Receptor-like protein 52 (811 aa).

The first 22 residues, Met-1–Ser-22, serve as a signal peptide directing secretion. Over Gln-23–Thr-770 the chain is Extracellular. N-linked (GlcNAc...) asparagine glycans are attached at residues Asn-47, Asn-64, Asn-74, Asn-93, Asn-109, and Asn-124. LRR repeat units follow at residues Ala-62–Phe-86, Pro-87–Cys-110, Lys-112–Leu-134, Ala-135–Ile-159, Lys-161–Leu-183, and Ser-184–Lys-208. One copy of the LRR 7; degenerate repeat lies at Lys-211–Asn-233. Residues Asn-233, Asn-246, Asn-260, Asn-295, and Asn-304 are each glycosylated (N-linked (GlcNAc...) asparagine). 8 LRR repeats span residues Met-234–Leu-258, Asn-260–Ala-281, Lys-282–Leu-305, Asn-307–Leu-329, Pro-330–Ser-354, Leu-356–Gly-377, Lys-379–Cys-401, and Thr-403–Asn-427. N-linked (GlcNAc...) asparagine glycans are attached at residues Asn-389, Asn-422, Asn-429, Asn-455, Asn-464, and Asn-485. LRR repeat units lie at residues Leu-441 to Leu-465, Ser-466 to Ser-489, Lys-491 to Ile-511, Ser-512 to Gln-537, Gln-539 to Phe-557, Ser-558 to Asn-581, Leu-625 to Leu-649, Lys-650 to Leu-673, Ile-674 to Leu-697, and Tyr-699 to Thr-722. Asn-525 carries an N-linked (GlcNAc...) asparagine glycan. 2 N-linked (GlcNAc...) asparagine glycosylation sites follow: Asn-571 and Asn-581. Residue Asn-656 is glycosylated (N-linked (GlcNAc...) asparagine). Asn-704 is a glycosylation site (N-linked (GlcNAc...) asparagine). The chain crosses the membrane as a helical span at residues Ala-771 to Val-791. Over Ser-792 to Ile-811 the chain is Cytoplasmic.

It belongs to the RLP family.

The protein localises to the cell membrane. Functionally, required for defense against powdery mildew pathogen. The protein is Receptor-like protein 52 of Arabidopsis thaliana (Mouse-ear cress).